A 126-amino-acid polypeptide reads, in one-letter code: Aspartate 1-decarboxylase (126 aa).

The Schiff-base intermediate with substrate; via pyruvic acid role is filled by Ser-25. At Ser-25 the chain carries Pyruvic acid (Ser). Thr-57 serves as a coordination point for substrate. The active-site Proton donor is the Tyr-58. Residue 73 to 75 (GAA) coordinates substrate.

This sequence belongs to the PanD family. In terms of assembly, heterooctamer of four alpha and four beta subunits. It depends on pyruvate as a cofactor. In terms of processing, is synthesized initially as an inactive proenzyme, which is activated by self-cleavage at a specific serine bond to produce a beta-subunit with a hydroxyl group at its C-terminus and an alpha-subunit with a pyruvoyl group at its N-terminus.

The protein localises to the cytoplasm. The catalysed reaction is L-aspartate + H(+) = beta-alanine + CO2. Its pathway is cofactor biosynthesis; (R)-pantothenate biosynthesis; beta-alanine from L-aspartate: step 1/1. Functionally, catalyzes the pyruvoyl-dependent decarboxylation of aspartate to produce beta-alanine. This Salmonella choleraesuis (strain SC-B67) protein is Aspartate 1-decarboxylase.